The sequence spans 119 residues: MARVKRGIMVRKRHKKLLEQAKGYRGARSRHYKVAHEAVMHALADAYRDRRRRKRDFRRLWIMRINAAARLHGTTYSRLINSLKQANIEIDRKMLADLAVRDPQAFARIVEQAQAAVTA.

The protein belongs to the bacterial ribosomal protein bL20 family.

Its function is as follows. Binds directly to 23S ribosomal RNA and is necessary for the in vitro assembly process of the 50S ribosomal subunit. It is not involved in the protein synthesizing functions of that subunit. This is Large ribosomal subunit protein bL20 from Chloroflexus aurantiacus (strain ATCC 29366 / DSM 635 / J-10-fl).